The following is a 60-amino-acid chain: Large ribosomal subunit protein bL32 (60 aa).

Residues Met1–Ala21 are disordered. Residues Ser9–His19 are compositionally biased toward basic residues.

This sequence belongs to the bacterial ribosomal protein bL32 family.

The chain is Large ribosomal subunit protein bL32 from Albidiferax ferrireducens (strain ATCC BAA-621 / DSM 15236 / T118) (Rhodoferax ferrireducens).